We begin with the raw amino-acid sequence, 686 residues long: Lysophospholipase 3 (686 aa).

A signal peptide spans 1–26 (MIRPLCSKIIISYIFAISQFLLAANA). The PLA2c domain occupies 39-592 (SCPDDINLVR…KNYCWNGTLD (554 aa)). N-linked (GlcNAc...) asparagine glycans are attached at residues Asn56, Asn82, Asn129, Asn166, Asn221, Asn283, Asn313, Asn351, Asn495, Asn519, Asn547, Asn571, Asn588, and Asn614. A lipid anchor (GPI-anchor amidated asparagine) is attached at Asn659. The propeptide at 660–686 (SGSHLSGISVKFSAMIMLTLLMFTGAV) is removed in mature form.

It belongs to the lysophospholipase family.

It is found in the cell membrane. The catalysed reaction is a 1-acyl-sn-glycero-3-phosphocholine + H2O = sn-glycerol 3-phosphocholine + a fatty acid + H(+). Functionally, sequentially removes both fatty acyl groups from diacylglycerophospholipids and therefore has both phospholipase A and lysophospholipase activities. Substrate preference is phosphatidylserine &gt; phosphatidylinositol. Does not cleave phosphatidylcholine, phosphatidylethanolamine, phosphatidic acid and phosphatidylinositol-bisphosphate. Mainly responsible for the degradation of phosphatidylinositol in vivo. This is Lysophospholipase 3 (PLB3) from Saccharomyces cerevisiae (strain ATCC 204508 / S288c) (Baker's yeast).